Here is a 129-residue protein sequence, read N- to C-terminus: DNA base-flipping protein (129 aa).

The protein belongs to the MGMT family. ATL subfamily. Interacts with HelD and UvrA.

Its function is as follows. Involved in DNA damage recognition. Binds DNA containing O(6)-methylguanine and larger O(6)-alkylguanine adducts, and to double-stranded DNA that contains an AP (apurinic/apyrimidinic) site. Binds to the damaged base and flips the base out of the DNA duplex into an extrahelical conformation, which allows processing by repair proteins. Works in partnership with the nucleotide excision repair (NER) pathway to enhance the repair of the O(6)-alkylguanine adducts larger than the methyl adduct. Also prevents methyl-directed mismatch repair (MMR)-mediated attack of the O(6)-alkylguanine:T mispairs for the larger alkyl groups. The sequence is that of DNA base-flipping protein from Escherichia coli (strain K12).